The primary structure comprises 849 residues: Aminopeptidase N (849 aa).

Substrate-binding positions include glutamate 122 and 259–263 (GAMEN). Histidine 294 serves as a coordination point for Zn(2+). Glutamate 295 acts as the Proton acceptor in catalysis. Residues histidine 298 and glutamate 317 each contribute to the Zn(2+) site.

It belongs to the peptidase M1 family. Monomer. Zn(2+) is required as a cofactor.

The protein localises to the cytoplasm. The enzyme catalyses Release of an N-terminal amino acid, Xaa-|-Yaa- from a peptide, amide or arylamide. Xaa is preferably Ala, but may be most amino acids including Pro (slow action). When a terminal hydrophobic residue is followed by a prolyl residue, the two may be released as an intact Xaa-Pro dipeptide.. Its function is as follows. Aminopeptidase with broad substrate specificity to several peptides. It has more affinity for oligopeptides than for dipeptides. It plays an essential role in the metabolism, it may be involved in nitrogen supply or protein turnover. In Lactococcus lactis subsp. lactis (Streptococcus lactis), this protein is Aminopeptidase N (pepN).